We begin with the raw amino-acid sequence, 446 residues long: O-antigen polymerase (446 aa).

11 helical membrane-spanning segments follow: residues 11–31 (ICSY…VINE), 33–53 (FCEI…VIII), 58–78 (QGGF…FILI), 104–124 (IYVF…VLLY), 147–167 (QLSM…IKSY), 186–206 (LYDE…SLLF), 211–231 (NFIL…LVGL), 252–272 (LKIK…SLFL), 355–375 (IYLG…SLAF), 391–411 (KLAY…IYFA), and 415–435 (LFDF…LSIV).

The protein localises to the cell inner membrane. The catalysed reaction is n lipid-linked O-antigen repeat units = a lipid-linked O antigen + (n-1) polyisoprenyl diphosphate.. It participates in bacterial outer membrane biogenesis; LPS O-antigen biosynthesis. In terms of biological role, polymerase involved in the biosynthesis of the lipopolysaccharide (LPS). Catalyzes the polymerization of the O-antigen repeat units on the periplasmic face of the inner membrane, leading to the formation of the lipid-linked O-antigen molecule. In vitro, shows a preference for bacteria-based, undecaprenyl-containing substrates rather than eukaryote-based, dolichol-containing substrates. In Escherichia coli, this protein is O-antigen polymerase.